The primary structure comprises 172 residues: Inorganic pyrophosphatase (172 aa).

Lys29, Arg43, and Tyr55 together coordinate substrate. Mg(2+) is bound by residues Asp65, Asp70, and Asp102. Tyr141 lines the substrate pocket.

The protein belongs to the PPase family. Homohexamer. Requires Mg(2+) as cofactor.

The protein resides in the cytoplasm. It carries out the reaction diphosphate + H2O = 2 phosphate + H(+). Functionally, catalyzes the hydrolysis of inorganic pyrophosphate (PPi) forming two phosphate ions. The sequence is that of Inorganic pyrophosphatase from Rickettsia prowazekii (strain Madrid E).